The primary structure comprises 610 residues: Glutamine--fructose-6-phosphate aminotransferase [isomerizing] (610 aa).

Catalysis depends on cysteine 2, which acts as the Nucleophile; for GATase activity. The Glutamine amidotransferase type-2 domain maps to 2–218; that stretch reads CGIVGAVAQR…EGDVAEITRR (217 aa). SIS domains lie at 286 to 426 and 459 to 600; these read AAEI…QQGR and LATD…VDQP. Lysine 605 functions as the For Fru-6P isomerization activity in the catalytic mechanism.

In terms of assembly, homodimer.

It localises to the cytoplasm. The enzyme catalyses D-fructose 6-phosphate + L-glutamine = D-glucosamine 6-phosphate + L-glutamate. Catalyzes the first step in hexosamine metabolism, converting fructose-6P into glucosamine-6P using glutamine as a nitrogen source. The protein is Glutamine--fructose-6-phosphate aminotransferase [isomerizing] of Vibrio vulnificus (strain YJ016).